The following is a 401-amino-acid chain: Argininosuccinate synthase (401 aa).

8–16 (AYSGGLDTT) contributes to the ATP binding site. Tyr87 lines the L-citrulline pocket. ATP is bound at residue Gly117. Positions 119, 123, and 124 each coordinate L-aspartate. An L-citrulline-binding site is contributed by Asn123. The L-citrulline site is built by Arg127, Ser175, Glu259, and Tyr271.

The protein belongs to the argininosuccinate synthase family. Type 1 subfamily. As to quaternary structure, homotetramer.

The protein resides in the cytoplasm. The enzyme catalyses L-citrulline + L-aspartate + ATP = 2-(N(omega)-L-arginino)succinate + AMP + diphosphate + H(+). It participates in amino-acid biosynthesis; L-arginine biosynthesis; L-arginine from L-ornithine and carbamoyl phosphate: step 2/3. This chain is Argininosuccinate synthase, found in Corynebacterium glutamicum (strain ATCC 13032 / DSM 20300 / JCM 1318 / BCRC 11384 / CCUG 27702 / LMG 3730 / NBRC 12168 / NCIMB 10025 / NRRL B-2784 / 534).